The following is a 239-amino-acid chain: Fatty acid metabolism regulator protein (239 aa).

The 69-residue stretch at 6–74 (KGPASFAEKY…HGKPTQVNNF (69 aa)) folds into the HTH gntR-type domain. The H-T-H motif DNA-binding region spans 34-53 (ERELSELIGVTRTTLREVLQ).

Homodimer.

It is found in the cytoplasm. Functionally, multifunctional regulator of fatty acid metabolism. This is Fatty acid metabolism regulator protein from Shewanella frigidimarina (strain NCIMB 400).